Consider the following 413-residue polypeptide: Histidine--tRNA ligase (413 aa).

The protein belongs to the class-II aminoacyl-tRNA synthetase family. As to quaternary structure, homodimer.

The protein localises to the cytoplasm. The catalysed reaction is tRNA(His) + L-histidine + ATP = L-histidyl-tRNA(His) + AMP + diphosphate + H(+). The polypeptide is Histidine--tRNA ligase (Fusobacterium nucleatum subsp. nucleatum (strain ATCC 25586 / DSM 15643 / BCRC 10681 / CIP 101130 / JCM 8532 / KCTC 2640 / LMG 13131 / VPI 4355)).